The following is a 731-amino-acid chain: Bifunctional trehalose-6-phosphate synthase/phosphatase (731 aa).

The interval 1–464 (MRLIVVSNRL…WGTDFIYSLI (464 aa)) is alpha,alpha-trehalose-phosphate synthase. Arginine 9 provides a ligand contact to D-glucose 6-phosphate. A UDP-alpha-D-glucose-binding site is contributed by 25–26 (GG). Residues tyrosine 89 and aspartate 143 each coordinate D-glucose 6-phosphate. Residues arginine 276 and lysine 281 each contribute to the UDP-alpha-D-glucose site. Arginine 314 lines the D-glucose 6-phosphate pocket. 379–383 (LVAKE) provides a ligand contact to UDP-alpha-D-glucose. The interval 465 to 731 (SAKSAREEVE…RSLLEQLRPP (267 aa)) is trehalose-6-phosphate phosphatase. Aspartate 503 acts as the Nucleophile in catalysis. Residues aspartate 503, aspartate 505, and aspartate 684 each coordinate Mg(2+). 503 to 505 (DYD) serves as a coordination point for alpha,alpha-trehalose 6-phosphate.

In the N-terminal section; belongs to the glycosyltransferase 20 family. It in the C-terminal section; belongs to the trehalose phosphatase family. In terms of assembly, may interact with the putative glycosyltransferase (GT) TTX_1305. TTX_1305 is required for the trehalose-6-phosphate synthase activity of tpsp. Requires Mg(2+) as cofactor.

The catalysed reaction is D-glucose 6-phosphate + UDP-alpha-D-glucose = alpha,alpha-trehalose 6-phosphate + UDP + H(+). It carries out the reaction alpha,alpha-trehalose 6-phosphate + H2O = alpha,alpha-trehalose + phosphate. It participates in glycan biosynthesis; trehalose biosynthesis. In terms of biological role, bifunctional enzyme which catalyzes the transfer of glucose from UDP-alpha-D-glucose to glucose-6-phosphate to form trehalose-6-phosphate (Tre6P) and removes the phosphate from Tre6P to produce free trehalose. This is Bifunctional trehalose-6-phosphate synthase/phosphatase from Thermoproteus tenax (strain ATCC 35583 / DSM 2078 / JCM 9277 / NBRC 100435 / Kra 1).